We begin with the raw amino-acid sequence, 514 residues long: Leucine-rich repeat-containing protein 14B (514 aa).

The stretch at 104 to 141 (RRRLRVADLTGIRDVQVQRCPCGRALGRWGRTQLLART) is one LRR 1; degenerate repeat. An LRR 2; degenerate repeat occupies 185 to 209 (RVHCPSFRADSLSPSQLLHVLRLAG). One copy of the LRR 4; degenerate repeat lies at 238–277 (FPRLASLTLPTKAFDAPPTYASTPDGEDPLLASIARELSK). LRR repeat units follow at residues 278-302 (MAQL…LGPL), 303-334 (QTPL…AHLE), 335-350 (VLDL…YPST), 359-386 (SRTL…GLSP), and 387-411 (CHRL…LFTA).

The protein belongs to the PRAME family. LRRC14 subfamily.

The polypeptide is Leucine-rich repeat-containing protein 14B (Homo sapiens (Human)).